The chain runs to 86 residues: Large ribosomal subunit protein bL27 (86 aa).

Residues 1-21 (MAHKKGGGSSRNGRDSESKRL) form a disordered region.

It belongs to the bacterial ribosomal protein bL27 family.

The chain is Large ribosomal subunit protein bL27 from Rubrobacter xylanophilus (strain DSM 9941 / JCM 11954 / NBRC 16129 / PRD-1).